Reading from the N-terminus, the 240-residue chain is Homeobox protein notochord (240 aa).

Polar residues predominate over residues 1 to 13 (MSSPAPSGTQVQP). Disordered regions lie at residues 1–21 (MSSPAPSGTQVQPGSLRPCPG) and 208–240 (QKLKLPSSSVMEEPSSSSDGNIQSEDAELGIGS). Positions 149–208 (TKRVRTTFNLQQLQELEKVFAKQHNLVGKERAQLAARLHLTENQVRIWFQNRRVKYQKQQ) form a DNA-binding region, homeobox. The segment covering 213 to 225 (PSSSVMEEPSSSS) has biased composition (low complexity).

The protein resides in the nucleus. Its function is as follows. Transcription factor that controls node morphogenesis. Acts downstream of both FOXA2 and Brachyury (T) during notochord development. Is essential for cilia formation in the posterior notochord (PNC) and for left-right patterning; acts upstream of FOXJ1 and RFX3 in this process and is required for the expression of various components important for axonemal assembly and function. Plays a role in regulating axial versus paraxial cell fate. Activates the transcription of ciliary proteins C11orf97 homolog, FAM183B and SPACA9 in the embryonic ventral node. This is Homeobox protein notochord (Noto) from Mus musculus (Mouse).